Consider the following 66-residue polypeptide: Large ribosomal subunit protein uL29 (66 aa).

Belongs to the universal ribosomal protein uL29 family.

The chain is Large ribosomal subunit protein uL29 from Bacillus licheniformis (strain ATCC 14580 / DSM 13 / JCM 2505 / CCUG 7422 / NBRC 12200 / NCIMB 9375 / NCTC 10341 / NRRL NRS-1264 / Gibson 46).